A 177-amino-acid chain; its full sequence is MALLPILEVPDPRLREKSTVVEVFDDNLQRLIDDMFETMYKAPGIGLAAIQVGVAKRLLVIDLQQPEEGGEAKRNPMVFINPELTPEGEEKRLYNEGCLSVPDQYAEVRRPSVINAKWQDRDGNFHEERIEGLLATCLQHEMDHLEGILFIDHLSRLKRGMLMKKLLKERKLREDSY.

Fe cation contacts are provided by Cys98 and His140. Residue Glu141 is part of the active site. Position 144 (His144) interacts with Fe cation.

It belongs to the polypeptide deformylase family. Fe(2+) is required as a cofactor.

It carries out the reaction N-terminal N-formyl-L-methionyl-[peptide] + H2O = N-terminal L-methionyl-[peptide] + formate. Functionally, removes the formyl group from the N-terminal Met of newly synthesized proteins. Requires at least a dipeptide for an efficient rate of reaction. N-terminal L-methionine is a prerequisite for activity but the enzyme has broad specificity at other positions. The sequence is that of Peptide deformylase from Zymomonas mobilis subsp. mobilis (strain ATCC 31821 / ZM4 / CP4).